The primary structure comprises 429 residues: Glutamate-1-semialdehyde 2,1-aminomutase 2 (429 aa).

N6-(pyridoxal phosphate)lysine is present on Lys-268.

It belongs to the class-III pyridoxal-phosphate-dependent aminotransferase family. HemL subfamily. In terms of assembly, homodimer. Pyridoxal 5'-phosphate is required as a cofactor.

The protein localises to the cytoplasm. The enzyme catalyses (S)-4-amino-5-oxopentanoate = 5-aminolevulinate. Its pathway is porphyrin-containing compound metabolism; protoporphyrin-IX biosynthesis; 5-aminolevulinate from L-glutamyl-tRNA(Glu): step 2/2. This chain is Glutamate-1-semialdehyde 2,1-aminomutase 2, found in Bacillus cereus (strain AH820).